Consider the following 645-residue polypeptide: Rab11 family-interacting protein 5 (645 aa).

In terms of domain architecture, C2 spans 1–146 (MALVRDPEPA…AGRAQHTQWY (146 aa)). Phosphoserine occurs at positions 176, 283, 286, 307, 357, and 367. The tract at residues 271–299 (GAELLTRSPSHSSWLSTEGGRDSIQSPKL) is disordered. Over residues 277–286 (RSPSHSSWLS) the composition is skewed to polar residues. The segment at 341 to 550 (SHVYNEEPQP…STALSSGLER (210 aa)) is disordered. Residues 357 to 374 (SISGPFPPSSSLHSVPPR) are compositionally biased toward low complexity. Residues 375-387 (SSEEGSRSSDDSW) are compositionally biased toward basic and acidic residues. Serine 391 and serine 395 each carry phosphoserine. The segment covering 452-463 (RMGLFHHHHHQG) has biased composition (basic residues). Phosphoserine occurs at positions 486, 530, 539, 545, and 640. Residues 578-640 (KDSAVLDQSA…ETSPTLLQIS (63 aa)) enclose the FIP-RBD domain.

As to quaternary structure, interacts with RAB11FIP4. Interacts with NAPG. Interacts with RO60. Interacts with RAB11A that has been activated by GTP binding. In terms of processing, phosphorylated on serine and threonine residues. Phosphorylation at Ser-357 is PKA-dependent.

It localises to the cytoplasm. The protein resides in the recycling endosome membrane. The protein localises to the early endosome membrane. Its subcellular location is the golgi apparatus membrane. It is found in the cytoplasmic vesicle. It localises to the secretory vesicle membrane. The protein resides in the mitochondrion membrane. In terms of biological role, rab effector involved in protein trafficking from apical recycling endosomes to the apical plasma membrane. Involved in insulin granule exocytosis. May regulate V-ATPase intracellular transport in response to extracellular acidosis. The polypeptide is Rab11 family-interacting protein 5 (Mus musculus (Mouse)).